A 692-amino-acid chain; its full sequence is Elongation factor G (692 aa).

Residues 8-282 enclose the tr-type G domain; sequence ENTRNIGIMA…GVVDYLPSPL (275 aa). Residues 17-24, 81-85, and 135-138 contribute to the GTP site; these read AHIDAGKT, DTPGH, and NKMD.

The protein belongs to the TRAFAC class translation factor GTPase superfamily. Classic translation factor GTPase family. EF-G/EF-2 subfamily.

It is found in the cytoplasm. In terms of biological role, catalyzes the GTP-dependent ribosomal translocation step during translation elongation. During this step, the ribosome changes from the pre-translocational (PRE) to the post-translocational (POST) state as the newly formed A-site-bound peptidyl-tRNA and P-site-bound deacylated tRNA move to the P and E sites, respectively. Catalyzes the coordinated movement of the two tRNA molecules, the mRNA and conformational changes in the ribosome. The protein is Elongation factor G of Geobacillus thermodenitrificans (strain NG80-2).